The following is an 809-amino-acid chain: Phenylalanine--tRNA ligase beta subunit (809 aa).

The tRNA-binding domain maps to 39–154; it reads APPTSKIVVG…EDTPVGQDIR (116 aa). One can recognise a B5 domain in the interval 405-480; it reads PQRAPVKMRV…RIYGFEKIPA (76 aa). Asp-458, Asp-464, Glu-467, and Glu-468 together coordinate Mg(2+). The FDX-ACB domain occupies 707–808; sequence SKFPPVRRDI…RMARAGARLR (102 aa).

The protein belongs to the phenylalanyl-tRNA synthetase beta subunit family. Type 1 subfamily. As to quaternary structure, tetramer of two alpha and two beta subunits. The cofactor is Mg(2+).

It localises to the cytoplasm. The catalysed reaction is tRNA(Phe) + L-phenylalanine + ATP = L-phenylalanyl-tRNA(Phe) + AMP + diphosphate + H(+). This Burkholderia lata (strain ATCC 17760 / DSM 23089 / LMG 22485 / NCIMB 9086 / R18194 / 383) protein is Phenylalanine--tRNA ligase beta subunit.